Here is a 1350-residue protein sequence, read N- to C-terminus: Tectonin beta-propeller repeat-containing protein (1350 aa).

TECPR repeat units follow at residues glycine 23–histidine 59, leucine 233–glycine 271, aspartate 280–glycine 320, and lysine 336–glycine 371. Over residues serine 396–lysine 415 the composition is skewed to low complexity. Disordered stretches follow at residues serine 396–serine 420 and serine 671–phenylalanine 691. The Galectin domain occupies tyrosine 816–arginine 955. TECPR repeat units follow at residues methionine 966–glycine 1000, aspartate 1187–glycine 1223, aspartate 1232–glutamate 1269, and serine 1278–glycine 1322.

It belongs to the TECPR1 family.

In terms of biological role, involved in peroxisome biogenesis. The sequence is that of Tectonin beta-propeller repeat-containing protein (Pex23) from Drosophila melanogaster (Fruit fly).